Consider the following 308-residue polypeptide: Cytochrome c biogenesis protein CcsA (308 aa).

7 helical membrane-spanning segments follow: residues 17–37, 43–63, 70–90, 142–162, 213–233, 246–260, and 274–294; these read IISI…VGLC, GMIT…IYSG, LYES…VPYF, MLLS…LLVI, VIGL…VWAN, ETWA…AIYL, and AIVA…VNLL.

It belongs to the CcmF/CycK/Ccl1/NrfE/CcsA family. As to quaternary structure, may interact with Ccs1.

The protein localises to the plastid. Its subcellular location is the chloroplast thylakoid membrane. Functionally, required during biogenesis of c-type cytochromes (cytochrome c6 and cytochrome f) at the step of heme attachment. The chain is Cytochrome c biogenesis protein CcsA from Nymphaea alba (White water-lily).